Here is a 65-residue protein sequence, read N- to C-terminus: Large ribosomal subunit protein uL29 (65 aa).

Belongs to the universal ribosomal protein uL29 family.

This chain is Large ribosomal subunit protein uL29 (rpmC), found in Xylella fastidiosa (strain 9a5c).